Consider the following 334-residue polypeptide: MADASSRTDTSIVVDNDDKNHQLENGHSGAVMASNSSDRSDRSDKLMDQKTIRRLAQNREAARKSRLRKKAYVQQLESSKLKLAQLEQELQKARQQGIFISSSGDQTHAMSGNGALTFDLEYTRWLEEQNKQINELRTAVNAHASDSDLRLIVDGIMAHYDEVFKVKGVAAKADVFHILSGMWKTPAERCFLWLGGFRPSELLKLLANHLEPLTEQQLLGLNNLQESSQQAEDALSQGMEALQQSLADTLAGSLGSSGSSGNVANYMGQMAMAMGKLGTLENFLCQADNLRQQTLHQMQRILTIRQASRALLAIHDYFSRLRALSSLWLARPRE.

Residues 1-13 (MADASSRTDTSIV) show a composition bias toward polar residues. The interval 1-49 (MADASSRTDTSIVVDNDDKNHQLENGHSGAVMASNSSDRSDRSDKLMDQ) is disordered. Basic and acidic residues predominate over residues 38–49 (DRSDRSDKLMDQ). Residues 48-92 (DQKTIRRLAQNREAARKSRLRKKAYVQQLESSKLKLAQLEQELQK) enclose the bZIP domain. Residues 50–70 (KTIRRLAQNREAARKSRLRKK) are basic motif. Positions 76 to 90 (LESSKLKLAQLEQEL) are leucine-zipper. A DOG1 domain is found at 115 to 331 (ALTFDLEYTR…RALSSLWLAR (217 aa)).

The protein belongs to the bZIP family. Interacts with NPR1/NH1 and NPR3/NH3.

It localises to the nucleus. Its function is as follows. Plays a negative role in rice basal defense responses to the bacterial blight pathogen Xanthomomas oryzae pv. oryzae (Xoo). May function in both positive and negative regulation of rice defense genes. Binds DNA in vitro. Acts as a transcriptional activator when bound to NPR1/NH1 in vitro. Binds to the promoter sequence of CRK10 in vitro. The polypeptide is Transcription factor TGA2.1 (Oryza sativa subsp. japonica (Rice)).